A 554-amino-acid polypeptide reads, in one-letter code: Phenylalanine--tRNA ligase beta subunit (554 aa).

The region spanning 276–351 (LSLKSRMISV…INYGYEKFEG (76 aa)) is the B5 domain. Mg(2+)-binding residues include aspartate 329, aspartate 335, glutamate 338, and glutamate 339.

Belongs to the phenylalanyl-tRNA synthetase beta subunit family. Type 2 subfamily. In terms of assembly, tetramer of two alpha and two beta subunits. It depends on Mg(2+) as a cofactor.

The protein localises to the cytoplasm. It catalyses the reaction tRNA(Phe) + L-phenylalanine + ATP = L-phenylalanyl-tRNA(Phe) + AMP + diphosphate + H(+). The chain is Phenylalanine--tRNA ligase beta subunit from Methanococcus maripaludis (strain C5 / ATCC BAA-1333).